A 549-amino-acid chain; its full sequence is 65-kDa microtubule-associated protein 9 (549 aa).

Coiled-coil stretches lie at residues 36–123 (IEIE…ERKI), 160–199 (SLRK…CSVL), and 459–492 (GNRL…HQGQ). Positions 474 to 549 (EEKEQERRRK…SFSTPLSRHG (76 aa)) are disordered. Residues 481–490 (RRKRDLKKHQ) show a composition bias toward basic residues. Ser501 and Ser546 each carry phosphoserine. Residues 514–549 (VSTNKRFVSSPHTPQTDSPHSAKSNQSFSTPLSRHG) show a composition bias toward polar residues.

The protein belongs to the MAP65/ASE1 family. As to quaternary structure, forms dimer. Binds to microtubules (MT).

The protein resides in the nucleus. It localises to the cytoplasm. It is found in the cytoskeleton. The protein localises to the spindle pole. This Arabidopsis thaliana (Mouse-ear cress) protein is 65-kDa microtubule-associated protein 9 (MAP65-9).